Reading from the N-terminus, the 275-residue chain is Monooxygenase af470 (275 aa).

It catalyses the reaction prefumagillin + NADPH + 2 O2 = fumagillin + acetaldehyde + NADP(+) + H2O. It participates in secondary metabolite biosynthesis; terpenoid biosynthesis. In terms of biological role, monooxygenase; part of the gene cluster that mediates the biosynthesis of fumagillin, a meroterpenoid that has numerous biological activities including irreversible inhibition of human type 2 methionine aminopeptidase (METAP2). Within the pathway, the monooxygenase af470 catalyzes the oxidative cleavage of prefumagillin to yield the final compound of the pathway, fumagillin. The pathway begins with the conversion of farnesyl pyrophosphate (FPP) to beta-trans-bergamotene by the membrane-bound beta-trans-bergamotene synthase af520. The multifunctional cytochrome P450 monooxygenase af510 then converts beta-trans-bergamotene into 5-keto-demethoxyfumagillol via several oxydation steps. 5-keto-demethoxyfumagillol is then subjected to successive C-6 hydroxylation and O-methylation by the dioxygenase af480 and O-methyltransferase af390-400, respectively, to yield 5-keto-fumagillol, which is then stereoselectively reduced by the keto-reductase af490 to 5R-hydroxy-seco-sesquiterpene. The next step is the polyketide transferase af380-catalyzed transfer of a dodecapentaenoyl group synthesized by the polyketide synthase af370 onto 5R-hydroxy-seco-sesquiterpene which leads to the production of prefumagillin. Finally, oxidative cleavage by the monooxygenase af470 converts prefumagillin to fumagillin. This is Monooxygenase af470 from Aspergillus fumigatus (strain ATCC MYA-4609 / CBS 101355 / FGSC A1100 / Af293) (Neosartorya fumigata).